We begin with the raw amino-acid sequence, 303 residues long: Probable serine acetyltransferase 1 (303 aa).

Disordered stretches follow at residues 1–36 (MTAG…ESDA) and 271–290 (NPAR…ESMD).

This sequence belongs to the transferase hexapeptide repeat family. As to quaternary structure, homomultimer.

It carries out the reaction L-serine + acetyl-CoA = O-acetyl-L-serine + CoA. It functions in the pathway amino-acid biosynthesis; L-cysteine biosynthesis; L-cysteine from L-serine: step 1/2. This Oryza sativa subsp. japonica (Rice) protein is Probable serine acetyltransferase 1 (SAT1).